The sequence spans 88 residues: Small ribosomal subunit protein bS16 (88 aa).

The protein belongs to the bacterial ribosomal protein bS16 family.

This Geotalea uraniireducens (strain Rf4) (Geobacter uraniireducens) protein is Small ribosomal subunit protein bS16.